The following is a 70-amino-acid chain: MLVLTRRVGETLMIGDDIKLTVVGIKSGQVRLGIDAPKDVQIQREELLLKNDKAENQAAESLEIEIVAAD.

This sequence belongs to the CsrA/RsmA family. As to quaternary structure, homodimer; the beta-strands of each monomer intercalate to form a hydrophobic core, while the alpha-helices form wings that extend away from the core.

It is found in the cytoplasm. Functionally, a key translational regulator that binds mRNA to regulate translation initiation and/or mRNA stability. Mediates global changes in gene expression, shifting from rapid growth to stress survival by linking envelope stress, the stringent response and the catabolite repression systems. Usually binds in the 5'-UTR; binding at or near the Shine-Dalgarno sequence prevents ribosome-binding, repressing translation, binding elsewhere in the 5'-UTR can activate translation and/or stabilize the mRNA. Its function is antagonized by small RNA(s). This is Translational regulator CsrA from Hydrogenovibrio crunogenus (strain DSM 25203 / XCL-2) (Thiomicrospira crunogena).